Here is a 522-residue protein sequence, read N- to C-terminus: Peptide chain release factor 3 (522 aa).

Residues 10-277 form the tr-type G domain; sequence ASRKTFAIIS…TFVDFAPSPS (268 aa). Residues 19–26, 87–91, and 141–144 contribute to the GTP site; these read SHPDAGKT, DTPGH, and NKMD.

Belongs to the TRAFAC class translation factor GTPase superfamily. Classic translation factor GTPase family. PrfC subfamily.

It is found in the cytoplasm. In terms of biological role, increases the formation of ribosomal termination complexes and stimulates activities of RF-1 and RF-2. It binds guanine nucleotides and has strong preference for UGA stop codons. It may interact directly with the ribosome. The stimulation of RF-1 and RF-2 is significantly reduced by GTP and GDP, but not by GMP. In Listeria monocytogenes serotype 4b (strain F2365), this protein is Peptide chain release factor 3.